Reading from the N-terminus, the 361-residue chain is Cell cycle control protein 50A (361 aa).

The segment at 1-28 (MAMNYNAKDEVDGGPPCPPGGTAKTRRP) is disordered. An N-acetylalanine modification is found at A2. Residues 2 to 48 (AMNYNAKDEVDGGPPCPPGGTAKTRRPDNTAFKQQRLPAWQPILTAG) are required for ATPase and aminophospholipid flippase activity. The Cytoplasmic portion of the chain corresponds to 2-49 (AMNYNAKDEVDGGPPCPPGGTAKTRRPDNTAFKQQRLPAWQPILTAGT). The segment at 49–348 (TVLPTFFIIG…LGVVLLVINH (300 aa)) is interaction with ATP8A2. Residues 50 to 70 (VLPTFFIIGLIFIPIGIGIFV) traverse the membrane as a helical segment. Residues 71–325 (TSNNIREIEI…SWMGGKNPFL (255 aa)) are Exoplasmic loop-facing. Disulfide bonds link C91/C104, C94/C102, and C157/C171. Residues N180, N190, and N294 are each glycosylated (N-linked (GlcNAc...) asparagine). The helical transmembrane segment at 326–346 (GIAYITIGSISFLLGVVLLVI) threads the bilayer. Topologically, residues 347–361 (NHKYRNSSNTADITI) are cytoplasmic.

The protein belongs to the CDC50/LEM3 family. Component of various P4-ATPase flippase complexes which consists of a catalytic alpha subunit and an accessory beta subunit. Interacts with ATP8A1 to form a flippase complex; this complex forms an intermediate phosphoenzyme. Interacts with ATP8A2 to form a flippase complex. ATP8B1:TMEM30A and ATP8B2:TMEM30A flippase complexes have been shown to form intermediate phosphoenzymes in vitro. Interacts with alpha subunits ATP8A1, ATP8B1, ATP8B2, ATP8B4, ATP10A, ATP10B, ATP10D, ATP11A, ATP11B and ATP11C. N-glycosylated; contributes to ATP8A2:TMEM30A flippase complex assembly but not to functional activity. In terms of tissue distribution, expressed in photoreceptor cells; detected in retina outer segment and other retinal layers (at protein level).

It localises to the membrane. It is found in the golgi apparatus. The protein resides in the cytoplasmic vesicle. Its subcellular location is the secretory vesicle membrane. The protein localises to the apical cell membrane. It localises to the photoreceptor inner segment. It is found in the cell projection. The protein resides in the cilium. Its subcellular location is the photoreceptor outer segment. Its function is as follows. Accessory component of a P4-ATPase flippase complex which catalyzes the hydrolysis of ATP coupled to the transport of aminophospholipids from the outer to the inner leaflet of various membranes and ensures the maintenance of asymmetric distribution of phospholipids. Phospholipid translocation also seems to be implicated in vesicle formation and in uptake of lipid signaling molecules. The beta subunit may assist in binding of the phospholipid substrate. Required for the proper folding, assembly and ER to Golgi exit of the ATP8A2:TMEM30A flippase complex. ATP8A2:TMEM30A may be involved in regulation of neurite outgrowth, and, reconstituted to liposomes, predomiminantly transports phosphatidylserine (PS) and to a lesser extent phosphatidylethanolamine (PE). The ATP8A1:TMEM30A flippase complex seems to play a role in regulation of cell migration probably involving flippase-mediated translocation of phosphatidylethanolamine (PE) at the plasma membrane. Required for the formation of the ATP8A2, ATP8B1 and ATP8B2 P-type ATPAse intermediate phosphoenzymes. Involved in uptake of platelet-activating factor (PAF). Can also mediate the export of alpha subunits ATP8A1, ATP8B1, ATP8B2, ATP8B4, ATP10A, ATP10B, ATP10D, ATP11A, ATP11B and ATP11C from the ER to other membrane localizations. The sequence is that of Cell cycle control protein 50A from Bos taurus (Bovine).